The following is a 74-amino-acid chain: Sodium channel neurotoxin MeuNaTxalpha-6 (74 aa).

The signal sequence occupies residues 1 to 7 (LMTGVES). The 65-residue stretch at 9–73 (RDAYIAKPHN…VPIRIPGKCH (65 aa)) folds into the LCN-type CS-alpha/beta domain. 4 cysteine pairs are disulfide-bonded: Cys19/Cys72, Cys23/Cys45, Cys31/Cys55, and Cys35/Cys57. A propeptide (removed by a carboxypeptidase) is located at residue Arg74.

It belongs to the long (4 C-C) scorpion toxin superfamily. Sodium channel inhibitor family. Alpha subfamily. In terms of tissue distribution, expressed by the venom gland.

Its subcellular location is the secreted. In terms of biological role, alpha toxins bind voltage-independently at site-3 of sodium channels (Nav) and inhibit the inactivation of the activated channels, thereby blocking neuronal transmission. In Mesobuthus eupeus (Lesser Asian scorpion), this protein is Sodium channel neurotoxin MeuNaTxalpha-6.